The following is a 510-amino-acid chain: D-alanine--D-alanyl carrier protein ligase (510 aa).

157 to 158 contributes to the ATP binding site; it reads TS. Asp-202 lines the D-alanine pocket. Residue 297–302 participates in ATP binding; that stretch reads NTYGPT. Val-306 is a binding site for D-alanine. Asp-389 and Lys-498 together coordinate ATP. Residue Lys-498 participates in D-alanine binding.

This sequence belongs to the ATP-dependent AMP-binding enzyme family. DltA subfamily.

The protein localises to the cytoplasm. It carries out the reaction holo-[D-alanyl-carrier protein] + D-alanine + ATP = D-alanyl-[D-alanyl-carrier protein] + AMP + diphosphate. Its pathway is cell wall biogenesis; lipoteichoic acid biosynthesis. In terms of biological role, catalyzes the first step in the D-alanylation of lipoteichoic acid (LTA), the activation of D-alanine and its transfer onto the D-alanyl carrier protein (Dcp) DltC. In an ATP-dependent two-step reaction, forms a high energy D-alanyl-AMP intermediate, followed by transfer of the D-alanyl residue as a thiol ester to the phosphopantheinyl prosthetic group of the Dcp. D-alanylation of LTA plays an important role in modulating the properties of the cell wall in Gram-positive bacteria, influencing the net charge of the cell wall. In Listeria monocytogenes serovar 1/2a (strain ATCC BAA-679 / EGD-e), this protein is D-alanine--D-alanyl carrier protein ligase.